Here is a 164-residue protein sequence, read N- to C-terminus: Aspartic proteinase nepenthesin-1 (164 aa).

The Peptidase A1 domain occupies 17–164 (YLMXLSIGTP…VSFVSAQCGA (148 aa)). Residue aspartate 35 is part of the active site. N-linked (GlcNAc...) asparagine glycosylation is present at asparagine 93.

It belongs to the peptidase A1 family. As to expression, parenchymal cells surrounding the secretory glands.

It localises to the secreted. It carries out the reaction Similar to pepsin, but also cleaves on either side of Asp and at Lys-|-Arg.. Inhibited by pepstatin and by diazoacetyl-D,L-norleucine methyl ester (DAN) in the presence of Cu(2+) ions. In terms of biological role, extracellular proteinase found in the pitcher fluid of carnivorous plants. Digest prey for nitrogen uptake. The chain is Aspartic proteinase nepenthesin-1 from Nepenthes distillatoria (Pitcher plant).